The primary structure comprises 292 residues: Peroxisomal 2,4-dienoyl-CoA reductase [(3E)-enoyl-CoA-producing] (292 aa).

Ala-2 is modified (N-acetylalanine). Residues 35–40 (GGGSGI), 60–64 (RSLPR), and Asp-86 contribute to the NADP(+) site. Arg-60 serves as a coordination point for substrate. Residues Arg-88, Phe-118, and 126 to 128 (SFN) each bind substrate. Lys-151 is subject to N6-acetyllysine. NADP(+)-binding positions include Lys-182 and 208-214 (PGPISGT). Arg-219 is a substrate binding site. Phosphoserine is present on Ser-287. Residues 290-292 (AKL) carry the Microbody targeting signal motif. An N6-acetyllysine modification is found at Lys-291.

It belongs to the short-chain dehydrogenases/reductases (SDR) family. 2,4-dienoyl-CoA reductase subfamily. As to quaternary structure, monomer, dimer and oligomer.

The protein localises to the peroxisome. The enzyme catalyses a (2E,4Z)-dienoyl-CoA + NADPH + H(+) = a 4,5-saturated-(3E)-enoyl-CoA + NADP(+). The catalysed reaction is a (2E,4E)-dienoyl-CoA + NADPH + H(+) = a 4,5-saturated-(3E)-enoyl-CoA + NADP(+). It catalyses the reaction (2E,4E)-hexadienoyl-CoA + NADPH + H(+) = (3E)-hexenoyl-CoA + NADP(+). It carries out the reaction (2E,4E)-decadienoyl-CoA + NADPH + H(+) = (3E)-decenoyl-CoA + NADP(+). The enzyme catalyses (2E,4Z,7Z,10Z,13Z,16Z,19Z)-docosaheptaenoyl-CoA + NADPH + H(+) = (3E,7Z,10Z,13Z,16Z,19Z)-docosahexaenoyl-CoA + NADP(+). In terms of biological role, auxiliary enzyme of beta-oxidation. Participates in the degradation of unsaturated fatty enoyl-CoA esters having double bonds in both even- and odd-numbered positions in peroxisome. Catalyzes the NADP-dependent reduction of 2,4-dienoyl-CoA to yield trans-3-enoyl-CoA. Has activity towards short and medium chain 2,4-dienoyl-CoAs, but also towards 2,4,7,10,13,16,19-docosaheptaenoyl-CoA, suggesting that it does not constitute a rate limiting step in the peroxisomal degradation of docosahexaenoic acid. The protein is Peroxisomal 2,4-dienoyl-CoA reductase [(3E)-enoyl-CoA-producing] (DECR2) of Pongo abelii (Sumatran orangutan).